The following is a 288-amino-acid chain: Ankyrin repeat and SOCS box protein 8 (288 aa).

Residue Ser-17 is modified to Phosphoserine. ANK repeat units follow at residues 52-81, 85-113, 117-146, and 150-179; these read GTLK…EVNA, YNRT…NPNA, NRDT…SVNA, and NNDT…EVRV. An SOCS box domain is found at 235 to 288; the sequence is QLCEKLTVLCSAPGTLKTLSRYAVRRSLGLQYLPDAVKGLPLPASLKEYLLLIE.

The protein belongs to the ankyrin SOCS box (ASB) family. In terms of assembly, interacts with TBK1; this interaction promotes TBK1 proteasomal degradation. Post-translationally, phosphorylated by TBK1.

It localises to the cytoplasm. It functions in the pathway protein modification; protein ubiquitination. Functionally, may be a substrate-recognition component of a SCF-like ECS (Elongin-Cullin-SOCS-box protein) E3 ubiquitin-protein ligase complex which mediates the ubiquitination and subsequent proteasomal degradation of target proteins. Inhibits IFN-beta production through the IRF3 signaling pathway by targeting TBK1 via 'Lys-48'-linked ubiquitination, leading to its proteasomal degradation. This chain is Ankyrin repeat and SOCS box protein 8 (ASB8), found in Bos taurus (Bovine).